Here is a 514-residue protein sequence, read N- to C-terminus: Peptide chain release factor 3 (514 aa).

Residues 8–268 (KKRRTFAIIS…IFLKFAPEPH (261 aa)) form the tr-type G domain. GTP-binding positions include 17 to 24 (SHPDAGKT), 85 to 89 (DTPGH), and 139 to 142 (NKLD).

The protein belongs to the TRAFAC class translation factor GTPase superfamily. Classic translation factor GTPase family. PrfC subfamily.

It localises to the cytoplasm. Its function is as follows. Increases the formation of ribosomal termination complexes and stimulates activities of RF-1 and RF-2. It binds guanine nucleotides and has strong preference for UGA stop codons. It may interact directly with the ribosome. The stimulation of RF-1 and RF-2 is significantly reduced by GTP and GDP, but not by GMP. This is Peptide chain release factor 3 from Streptococcus pneumoniae (strain CGSP14).